The chain runs to 1497 residues: Polyunsaturated fatty acid synthase subunit C (1497 aa).

Dehydratase (DH) domain regions lie at residues 271–422 (YKLC…DYGK) and 797–937 (QGQY…RVRI). Residues 944 to 958 (ASSSASSVGSSASAE) show a composition bias toward low complexity. Residues 944 to 977 (ASSSASSVGSSASAEVAERTRSKAAPQPVASGPA) form a disordered region. Positions 1026 to 1470 (LGDLGDRSFM…ILRGACYLRR (445 aa)) are enoylreductase (ER) domain.

The protein belongs to the thioester dehydratase family. FabA subfamily. Component of the polyunsaturated fatty acid synthase complex composed of at least ORF-A, ORF-B and ORF-C.

The protein operates within lipid metabolism; fatty acid biosynthesis. Polyketide synthase-like protein; part of the polyunsaturated fatty acid synthase composed of the 3 PKS-like subunits A, B and C. While the saturated fatty acids (SFAs) in Thraustochytrium are produced by the conventional fatty acid synthase (FAS) pathway, polyunsaturated fatty acids (PUFAs) including docosahexeanoic acid (DHA) and docosapentaenoic acid (DPA) are synthesized via an anaerobical PKS pathway. PUFA synthase assimilates fatty acyl-CoA, the product of FAS, as the starter unit to synthesize DPA, and this starter unit may be butyryl-CoA, hexanoyl-CoA, or octanoyl-CoA. DPA and DHA biosynthesis seem to differ by the reduction at the N-3 position by PUFA synthase, not the extension of carbon chain. In DHA biosynthesis, PUFA synthase extends the fatty acyl chain from the methyl toward the carboxyl end, and the double bond is formed when the carbon chain is growing, instead of afterward. Therefore, PUFA synthase is unable to transform DPA to DHA, suggesting that DPA is not the precursor of DHA. Moreover, DPA molecule is partly extended by FAS KS domain, so DPA biosynthesis is less dependent on PUFA synthase KS domain than DHA. The chain is Polyunsaturated fatty acid synthase subunit C from Thraustochytrium sp. (strain ATCC 26185 / S-3).